Consider the following 195-residue polypeptide: C2 domain-containing protein DDB_G0290753 (195 aa).

The 124-residue stretch at 38–161 folds into the C2 domain; it reads KKLTKETKFE…NIKKYSYTFK (124 aa). Residues D72, D78, D131, D133, and D139 each coordinate Ca(2+).

The cofactor is Ca(2+).

This is C2 domain-containing protein DDB_G0290753 from Dictyostelium discoideum (Social amoeba).